A 128-amino-acid chain; its full sequence is Lymphocyte antigen 6 complex locus protein G5c (128 aa).

Positions 1-29 (MGAEYGCLPSTSQALYVILLIVLVRMSLV) are cleaved as a signal peptide. Residues 37-128 (LRCYRCLLET…NPQNRVFYIP (92 aa)) enclose the UPAR/Ly6 domain. Cystine bridges form between cysteine 39–cysteine 66, cysteine 42–cysteine 51, cysteine 58–cysteine 85, cysteine 94–cysteine 111, and cysteine 112–cysteine 117. Asparagine 73 carries N-linked (GlcNAc...) asparagine glycosylation.

As to quaternary structure, forms oligomers. N-glycosylated. In terms of tissue distribution, abundantly expressed in the epididymis.

It is found in the secreted. Its function is as follows. May have a role in hematopoietic cell differentiation. This chain is Lymphocyte antigen 6 complex locus protein G5c (LY6G5C), found in Canis lupus familiaris (Dog).